A 55-amino-acid chain; its full sequence is Ovomucoid (55 aa).

Residues 5–55 (VDCSEHPKPACTLDYRPICGSDSKTYSNKCDFCNAVMDSNGTLTLSHFGKC) enclose the Kazal-like domain. Disulfide bonds link Cys7-Cys37, Cys15-Cys34, and Cys23-Cys55. N-linked (GlcNAc...) asparagine glycosylation is present at Asn44.

It localises to the secreted. This chain is Ovomucoid, found in Dacelo novaeguineae (Laughing kookaburra).